We begin with the raw amino-acid sequence, 33 residues long: MSDIN-like toxin proprotein 1 (33 aa).

A propeptide spanning residues 1–10 (MSDINATRLP) is cleaved from the precursor. The segment at residues 11 to 18 (IIWAPVVP) is a cross-link (cyclopeptide (Ile-Pro)). Residues 19 to 33 (CISDDNDSTLTRGQR) constitute a propeptide that is removed on maturation.

It belongs to the MSDIN fungal toxin family. In terms of processing, processed by the macrocyclase-peptidase enzyme POPB to yield a toxic cyclic octapeptide. POPB first removes 10 residues from the N-terminus. Conformational trapping of the remaining peptide forces the enzyme to release this intermediate rather than proceed to macrocyclization. The enzyme rebinds the remaining peptide in a different conformation and catalyzes macrocyclization of the N-terminal 8 residues.

Its function is as follows. Probable toxin that belongs to the MSDIN-like toxin family responsible for a large number of food poisoning cases and deaths. This is MSDIN-like toxin proprotein 1 from Amanita fuliginea (East Asian brown death cap).